Consider the following 47-residue polypeptide: Large ribosomal subunit protein eL40 (47 aa).

The protein belongs to the eukaryotic ribosomal protein eL40 family.

This Methanococcus maripaludis (strain C5 / ATCC BAA-1333) protein is Large ribosomal subunit protein eL40.